The following is a 341-amino-acid chain: S-adenosylmethionine:tRNA ribosyltransferase-isomerase (341 aa).

This sequence belongs to the QueA family. In terms of assembly, monomer.

The protein resides in the cytoplasm. The catalysed reaction is 7-aminomethyl-7-carbaguanosine(34) in tRNA + S-adenosyl-L-methionine = epoxyqueuosine(34) in tRNA + adenine + L-methionine + 2 H(+). It participates in tRNA modification; tRNA-queuosine biosynthesis. In terms of biological role, transfers and isomerizes the ribose moiety from AdoMet to the 7-aminomethyl group of 7-deazaguanine (preQ1-tRNA) to give epoxyqueuosine (oQ-tRNA). The chain is S-adenosylmethionine:tRNA ribosyltransferase-isomerase from Clostridium botulinum (strain Alaska E43 / Type E3).